Here is a 434-residue protein sequence, read N- to C-terminus: 23S rRNA (uracil(1939)-C(5))-methyltransferase RlmD (434 aa).

Residues 10–68 (RVTTRQIITVTVNDLDPFGQGVARHQGKALFVSGVLPQEQAEVVLVEDKKQYARAQVKR) form the TRAM domain. Residues Cys81, Cys87, Cys90, and Cys162 each contribute to the [4Fe-4S] cluster site. S-adenosyl-L-methionine contacts are provided by Gln265, Phe294, Asn299, Glu315, Asn342, and Asp363. Cys389 acts as the Nucleophile in catalysis.

This sequence belongs to the class I-like SAM-binding methyltransferase superfamily. RNA M5U methyltransferase family. RlmD subfamily.

It catalyses the reaction uridine(1939) in 23S rRNA + S-adenosyl-L-methionine = 5-methyluridine(1939) in 23S rRNA + S-adenosyl-L-homocysteine + H(+). Catalyzes the formation of 5-methyl-uridine at position 1939 (m5U1939) in 23S rRNA. The polypeptide is 23S rRNA (uracil(1939)-C(5))-methyltransferase RlmD (Klebsiella pneumoniae (strain 342)).